A 544-amino-acid chain; its full sequence is Chaperonin GroEL (544 aa).

Residues T30–P33, K51, D87–T91, G415, D481–L483, and D497 each bind ATP.

The protein belongs to the chaperonin (HSP60) family. In terms of assembly, forms a cylinder of 14 subunits composed of two heptameric rings stacked back-to-back. Interacts with the co-chaperonin GroES.

It localises to the cytoplasm. It carries out the reaction ATP + H2O + a folded polypeptide = ADP + phosphate + an unfolded polypeptide.. Its function is as follows. Together with its co-chaperonin GroES, plays an essential role in assisting protein folding. The GroEL-GroES system forms a nano-cage that allows encapsulation of the non-native substrate proteins and provides a physical environment optimized to promote and accelerate protein folding. The chain is Chaperonin GroEL from Chlamydia muridarum (strain MoPn / Nigg).